The sequence spans 275 residues: Membrane protein insertase YidC 1 (275 aa).

Residues 1 to 25 (MRKVLRVKKNIKIARIVPLVLLLVA) form the signal peptide. A lipid anchor (N-palmitoyl cysteine) is attached at Cys-26. Cys-26 carries S-diacylglycerol cysteine lipidation. The next 5 helical transmembrane spans lie at 58–78 (SIGVGIILFTLTIRLMLMPLF), 129–149 (YASLLPLLIQMPVMIALFQAL), 171–191 (LYLLPVLAAVFTFLSTWLTNL), 198–216 (VMMTVMIYVMPLMIFFMGF), and 222–240 (VVLYWTVSNAFQVVQLLLL).

It belongs to the OXA1/ALB3/YidC family. Type 2 subfamily.

The protein resides in the cell membrane. Required for the insertion and/or proper folding and/or complex formation of integral membrane proteins into the membrane. Involved in integration of membrane proteins that insert both dependently and independently of the Sec translocase complex, as well as at least some lipoproteins. In Streptococcus pyogenes serotype M6 (strain ATCC BAA-946 / MGAS10394), this protein is Membrane protein insertase YidC 1.